A 1098-amino-acid polypeptide reads, in one-letter code: Mediator of RNA polymerase II transcription subunit 5 (1098 aa).

The segment at 1019–1041 (PDDVQKSADMKPDTGIKEDDSEK) is disordered. Basic and acidic residues predominate over residues 1021 to 1041 (DVQKSADMKPDTGIKEDDSEK).

It belongs to the Mediator complex subunit 5 family. In terms of assembly, component of the Mediator complex.

It localises to the nucleus. Its function is as follows. Component of the Mediator complex, a coactivator involved in the regulated transcription of nearly all RNA polymerase II-dependent genes. Mediator functions as a bridge to convey information from gene-specific regulatory proteins to the basal RNA polymerase II transcription machinery. Mediator is recruited to promoters by direct interactions with regulatory proteins and serves as a scaffold for the assembly of a functional preinitiation complex with RNA polymerase II and the general transcription factors. The polypeptide is Mediator of RNA polymerase II transcription subunit 5 (NUT1) (Eremothecium gossypii (strain ATCC 10895 / CBS 109.51 / FGSC 9923 / NRRL Y-1056) (Yeast)).